A 600-amino-acid polypeptide reads, in one-letter code: Aspartate--tRNA(Asp/Asn) ligase (600 aa).

Residue glutamate 176 participates in L-aspartate binding. An aspartate region spans residues 200-203 (QQFK). L-aspartate contacts are provided by arginine 222 and histidine 452. Residue 222-224 (RDE) participates in ATP binding. Glutamate 490 contacts ATP. Arginine 497 is an L-aspartate binding site. 542–545 (GIDR) provides a ligand contact to ATP.

It belongs to the class-II aminoacyl-tRNA synthetase family. Type 1 subfamily. As to quaternary structure, homodimer.

It localises to the cytoplasm. The enzyme catalyses tRNA(Asx) + L-aspartate + ATP = L-aspartyl-tRNA(Asx) + AMP + diphosphate. Aspartyl-tRNA synthetase with relaxed tRNA specificity since it is able to aspartylate not only its cognate tRNA(Asp) but also tRNA(Asn). Reaction proceeds in two steps: L-aspartate is first activated by ATP to form Asp-AMP and then transferred to the acceptor end of tRNA(Asp/Asn). This Rickettsia felis (strain ATCC VR-1525 / URRWXCal2) (Rickettsia azadi) protein is Aspartate--tRNA(Asp/Asn) ligase.